Consider the following 619-residue polypeptide: 1-deoxy-D-xylulose-5-phosphate synthase (619 aa).

Thiamine diphosphate is bound by residues H74 and G115 to S117. Position 146 (D146) interacts with Mg(2+). Thiamine diphosphate-binding positions include G147–A148, N175, and Y285. N175 lines the Mg(2+) pocket. The tract at residues E289–C312 is disordered. The span at A302–C312 shows a compositional bias: basic and acidic residues. E365 is a thiamine diphosphate binding site.

The protein belongs to the transketolase family. DXPS subfamily. In terms of assembly, homodimer. Mg(2+) serves as cofactor. It depends on thiamine diphosphate as a cofactor.

It carries out the reaction D-glyceraldehyde 3-phosphate + pyruvate + H(+) = 1-deoxy-D-xylulose 5-phosphate + CO2. The protein operates within metabolic intermediate biosynthesis; 1-deoxy-D-xylulose 5-phosphate biosynthesis; 1-deoxy-D-xylulose 5-phosphate from D-glyceraldehyde 3-phosphate and pyruvate: step 1/1. Functionally, catalyzes the acyloin condensation reaction between C atoms 2 and 3 of pyruvate and glyceraldehyde 3-phosphate to yield 1-deoxy-D-xylulose-5-phosphate (DXP). The polypeptide is 1-deoxy-D-xylulose-5-phosphate synthase (Clostridium botulinum (strain Eklund 17B / Type B)).